The primary structure comprises 173 residues: MDITIQHPWFRRQFYSFFGPNKMFEQCFGEHIQEADLFPSSVLSPFYFKYPFLRLPSWIESGLSEMRLEKDKFSINLDVKHFSPEELKVKVSGDFIEIHGKHEERQDEHGYVSRDFQRRYKIPVDVDPLSITSSLSPDGVLTVCGPRKQGDVPERSIPITREEKAALGAAPKK.

Residue Met-1 is modified to N-acetylmethionine. Residues 54–162 (RLPSWIESGL…PERSIPITRE (109 aa)) enclose the sHSP domain. The Zn(2+) site is built by His-81, His-102, Glu-104, and His-109.

Belongs to the small heat shock protein (HSP20) family. In terms of assembly, heteromer composed of three CRYAA and one CRYAB subunits. Aggregates with homologous proteins, including the small heat shock protein HSPB1, to form large heteromeric complexes. Inter-subunit bridging via zinc ions enhances stability, which is crucial as there is no protein turn over in the lens.

In terms of biological role, may contribute to the transparency and refractive index of the lens. This Aquarana catesbeiana (American bullfrog) protein is Alpha-crystallin B chain (CRYAB).